We begin with the raw amino-acid sequence, 469 residues long: Sulfate adenylyltransferase subunit 1 (469 aa).

A tr-type G domain is found at 22–236 (KDMLRVLTCG…LLNTVSVEQD (215 aa)). The G1 stretch occupies residues 31–38 (GSVDDGKS). A GTP-binding site is contributed by 31–38 (GSVDDGKS). The G2 stretch occupies residues 89-93 (GITID). Residues 110 to 113 (DTPG) are G3. GTP-binding positions include 110-114 (DTPGH) and 165-168 (NKMD). A G4 region spans residues 165-168 (NKMD). The interval 202-204 (SAL) is G5.

Belongs to the TRAFAC class translation factor GTPase superfamily. Classic translation factor GTPase family. CysN/NodQ subfamily. As to quaternary structure, heterodimer composed of CysD, the smaller subunit, and CysN.

It catalyses the reaction sulfate + ATP + H(+) = adenosine 5'-phosphosulfate + diphosphate. The protein operates within sulfur metabolism; hydrogen sulfide biosynthesis; sulfite from sulfate: step 1/3. With CysD forms the ATP sulfurylase (ATPS) that catalyzes the adenylation of sulfate producing adenosine 5'-phosphosulfate (APS) and diphosphate, the first enzymatic step in sulfur assimilation pathway. APS synthesis involves the formation of a high-energy phosphoric-sulfuric acid anhydride bond driven by GTP hydrolysis by CysN coupled to ATP hydrolysis by CysD. In Shewanella woodyi (strain ATCC 51908 / MS32), this protein is Sulfate adenylyltransferase subunit 1.